The primary structure comprises 493 residues: uncharacterized protein (493 aa).

The interval 96 to 124 (TTVAKASPPPAKPASAPTEITWKGSPQFT) is disordered.

This is an uncharacterized protein from Caulobacter vibrioides (strain ATCC 19089 / CIP 103742 / CB 15) (Caulobacter crescentus).